A 458-amino-acid chain; its full sequence is Argininosuccinate lyase (458 aa).

It belongs to the lyase 1 family. Argininosuccinate lyase subfamily.

Its subcellular location is the cytoplasm. The enzyme catalyses 2-(N(omega)-L-arginino)succinate = fumarate + L-arginine. It functions in the pathway amino-acid biosynthesis; L-arginine biosynthesis; L-arginine from L-ornithine and carbamoyl phosphate: step 3/3. The chain is Argininosuccinate lyase from Salmonella choleraesuis (strain SC-B67).